Here is a 385-residue protein sequence, read N- to C-terminus: Homoserine O-succinyltransferase (385 aa).

Residues 51 to 360 (NAVLICHALS…DSPHGHDAFL (310 aa)) enclose the AB hydrolase-1 domain. Serine 157 acts as the Nucleophile in catalysis. A substrate-binding site is contributed by arginine 227. Residues aspartate 323 and histidine 356 contribute to the active site. Aspartate 357 serves as a coordination point for substrate.

The protein belongs to the AB hydrolase superfamily. MetX family. As to quaternary structure, homodimer.

Its subcellular location is the cytoplasm. It carries out the reaction L-homoserine + succinyl-CoA = O-succinyl-L-homoserine + CoA. Its pathway is amino-acid biosynthesis; L-methionine biosynthesis via de novo pathway; O-succinyl-L-homoserine from L-homoserine: step 1/1. In terms of biological role, transfers a succinyl group from succinyl-CoA to L-homoserine, forming succinyl-L-homoserine. The chain is Homoserine O-succinyltransferase from Hahella chejuensis (strain KCTC 2396).